We begin with the raw amino-acid sequence, 356 residues long: Dihydroorotate dehydrogenase (quinone) (356 aa).

Residues 67 to 71 and T91 each bind FMN; that span reads AGFDK. K71 is a binding site for substrate. Substrate is bound at residue 116–120; that stretch reads NRMGF. Positions 153 and 186 each coordinate FMN. N186 contacts substrate. Catalysis depends on S189, which acts as the Nucleophile. A substrate-binding site is contributed by N191. 2 residues coordinate FMN: K228 and T256. A substrate-binding site is contributed by 257–258; sequence NT. FMN is bound by residues G282, G311, and 332–333; that span reads YT.

The protein belongs to the dihydroorotate dehydrogenase family. Type 2 subfamily. Monomer. FMN serves as cofactor.

It is found in the cell membrane. It carries out the reaction (S)-dihydroorotate + a quinone = orotate + a quinol. It participates in pyrimidine metabolism; UMP biosynthesis via de novo pathway; orotate from (S)-dihydroorotate (quinone route): step 1/1. Its function is as follows. Catalyzes the conversion of dihydroorotate to orotate with quinone as electron acceptor. In Pseudarthrobacter chlorophenolicus (strain ATCC 700700 / DSM 12829 / CIP 107037 / JCM 12360 / KCTC 9906 / NCIMB 13794 / A6) (Arthrobacter chlorophenolicus), this protein is Dihydroorotate dehydrogenase (quinone).